Here is a 138-residue protein sequence, read N- to C-terminus: MAYAQWVIIIIHNVGSQDVKIKNLKASWGKLHADGDKDAEVSASNYEGKIVKPDEKLQINACGRSDAAEGTTGTFDLVDPADGDKQVRHFYWDCPWGSKTNTWTVSGSNTKWMIEYSGQNLDSGALGTITVDTLKKGN.

Belongs to the aegerolysin family. In terms of assembly, monomer.

Functionally, has hemolytic activity against bovine erythrocytes at nanomolar concentrations in vitro. Promotes active pleurotolysin B (PlyB)-dependent permeabilization of membranes rich in cholesterol and sphingomyelin. May play an important role in the initial phase of fungal fruiting. The polypeptide is Ostreolysin A6 (OlyA6) (Pleurotus ostreatus (Oyster mushroom)).